Consider the following 111-residue polypeptide: Small ribosomal subunit protein bS16 (111 aa).

Belongs to the bacterial ribosomal protein bS16 family.

This chain is Small ribosomal subunit protein bS16, found in Rickettsia canadensis (strain McKiel).